We begin with the raw amino-acid sequence, 92 residues long: uncharacterized protein (92 aa).

One can recognise an HTH cro/C1-type domain in the interval 25–83 (LEEKLKQEKIDRKYLAQVTNIPYTTVSRIMRAEANREFNPEIDTILKIAKYFNCTMDEV). A DNA-binding region (H-T-H motif) is located at residues 36 to 55 (RKYLAQVTNIPYTTVSRIMR).

This is an uncharacterized protein from Rickettsia prowazekii (strain Madrid E).